The sequence spans 152 residues: Protein FERTILITY RESTORER RF2, mitochondrial (152 aa).

The N-terminal 52 residues, 1–52 (MSTLVTCSLPGAVTTHASTRRFGGSQFQTSQASCISFKREVSAKAVLRSVRC), are a transit peptide targeting the mitochondrion. Polar residues predominate over residues 52–69 (CNATQTQSAQRKSSTATV). Residues 52–99 (CNATQTQSAQRKSSTATVKRSDPKGKIQGPKLDDGSGGFPPFRFGKGG) form a disordered region.

It localises to the mitochondrion. Functionally, restores fertility in rice varieties with LD-type cytoplasmic male sterility (CMS). CMS is caused by genetic incompatibility between nuclei and mitochondria within male reproductive organs. Corresponds to the functional allele of RF2, which is dependent of the presence of Ile-78 in the japonica cultivars Fukuyama and Owarihatamochi (AC F1SZ42), and indica cultivar Kasalath (AC F1SZ41). Non-functional RF2 alleles are found in japonica cultivars Taichung 65 and Nipponbare (AC F1SZ44), where Ile-78 is replaced by Thr-78. The chain is Protein FERTILITY RESTORER RF2, mitochondrial from Oryza sativa subsp. japonica (Rice).